The chain runs to 247 residues: 5-oxoprolinase subunit A (247 aa).

The protein belongs to the LamB/PxpA family. As to quaternary structure, forms a complex composed of PxpA, PxpB and PxpC.

It carries out the reaction 5-oxo-L-proline + ATP + 2 H2O = L-glutamate + ADP + phosphate + H(+). Its function is as follows. Catalyzes the cleavage of 5-oxoproline to form L-glutamate coupled to the hydrolysis of ATP to ADP and inorganic phosphate. The protein is 5-oxoprolinase subunit A of Ralstonia pickettii (strain 12J).